Here is a 352-residue protein sequence, read N- to C-terminus: C-C chemokine receptor type 5 (352 aa).

Residues 1–30 (MDYQVSSPTYDIDYYTSEPCQKINVKQIAA) are Extracellular-facing. Tyr3 carries the sulfotyrosine modification. Residues Ser6 and Ser7 are each glycosylated (O-linked (GalNAc...) serine). Residues Tyr10, Tyr14, and Tyr15 each carry the sulfotyrosine modification. 2 cysteine pairs are disulfide-bonded: Cys20–Cys269 and Cys101–Cys178. The chain crosses the membrane as a helical span at residues 31 to 58 (RLLPPLYSLVFIFGFVGNILVVLILINC). The Cytoplasmic portion of the chain corresponds to 59–68 (KRLKSMTDIY). The chain crosses the membrane as a helical span at residues 69–89 (LLNLAISDLLFLLTVPFWAHY). At 90 to 102 (AAAQWDFGNIMCQ) the chain is on the extracellular side. Residues 103-124 (LLTGLYFIGFFSGIFFIILLTI) form a helical membrane-spanning segment. At 125-141 (DRYLAIVHAVFALKART) the chain is on the cytoplasmic side. A helical membrane pass occupies residues 142–166 (VTFGVVTSVITWVVAVFASLPGIIF). At 167–198 (TRSQREGLHYTCSSHFPYSQYQFWKNFRTLKI) the chain is on the extracellular side. A helical membrane pass occupies residues 199 to 218 (VILGLVLPLLVMVICYSGIL). Over 219-235 (KTLLRCRNEKKRHRAVR) the chain is Cytoplasmic. The helical transmembrane segment at 236-260 (LIFTIMIVYFLFWAPYNIVLLLNTF) threads the bilayer. Residues 261–277 (QEFFGLNNCSSSNRLDQ) lie on the Extracellular side of the membrane. The chain crosses the membrane as a helical span at residues 278–301 (AMQVTETLGMTHCCINPIIYAFVG). Residues 302–352 (EKFRNYLLVFFQKHIAKRFCKCCSIFQQEAPERASSVYTRTTGEQEISVGL) are Cytoplasmic-facing. S-palmitoyl cysteine attachment occurs at residues Cys321, Cys323, and Cys324. Phosphoserine; by BARK1 is present on residues Ser336, Ser337, and Ser349.

This sequence belongs to the G-protein coupled receptor 1 family. As to quaternary structure, interacts with PRAF2. Efficient ligand binding to CCL3/MIP-1alpha and CCL4/MIP-1beta requires sulfation, O-glycosylation and sialic acid modifications. Glycosylation on Ser-6 is required for efficient binding of CCL4. Interacts with GRK2. Interacts with ARRB1 and ARRB2. Interacts with CNIH4. Interacts with S100A4; this interaction stimulates T-lymphocyte chemotaxis. Sulfated on at least 2 of the N-terminal tyrosines. Sulfation is required for efficient binding of the chemokines, CCL3 and CCL4. In terms of processing, palmitoylation in the C-terminal is important for cell surface expression. Post-translationally, phosphorylation on serine residues in the C-terminal is stimulated by binding CC chemokines especially by APO-RANTES. O-glycosylated, but not N-glycosylated. Ser-6 appears to be the major site even if Ser-7 may be also O-glycosylated. Also sialylated glycans present which contribute to chemokine binding. Thr-16 and Ser-17 may also be glycosylated and, if so, with small moieties such as a T-antigen.

It localises to the cell membrane. Functionally, receptor for a number of inflammatory CC-chemokines including CCL3/MIP-1-alpha, CCL4/MIP-1-beta and RANTES and subsequently transduces a signal by increasing the intracellular calcium ion level. May play a role in the control of granulocytic lineage proliferation or differentiation. Participates in T-lymphocyte migration to the infection site by acting as a chemotactic receptor. This is C-C chemokine receptor type 5 (CCR5) from Mandrillus leucophaeus (Drill).